The primary structure comprises 358 residues: Pyruvate dehydrogenase E1 component subunit alpha (358 aa).

As to quaternary structure, heterodimer of an alpha and a beta chain. It depends on thiamine diphosphate as a cofactor.

The catalysed reaction is N(6)-[(R)-lipoyl]-L-lysyl-[protein] + pyruvate + H(+) = N(6)-[(R)-S(8)-acetyldihydrolipoyl]-L-lysyl-[protein] + CO2. In terms of biological role, the pyruvate dehydrogenase complex catalyzes the overall conversion of pyruvate to acetyl-CoA and CO(2). It contains multiple copies of three enzymatic components: pyruvate dehydrogenase (E1), dihydrolipoamide acetyltransferase (E2) and lipoamide dehydrogenase (E3). The protein is Pyruvate dehydrogenase E1 component subunit alpha (pdhA) of Mycoplasma pneumoniae (strain ATCC 29342 / M129 / Subtype 1) (Mycoplasmoides pneumoniae).